The sequence spans 124 residues: Fluoride-specific ion channel FluC 2 (124 aa).

The next 3 membrane-spanning stretches (helical) occupy residues 36-56 (TFLI…YLAF), 66-86 (LFVM…SLDT), and 100-120 (LYAI…LALV). 2 residues coordinate Na(+): Gly-74 and Thr-77.

Belongs to the fluoride channel Fluc/FEX (TC 1.A.43) family.

Its subcellular location is the cell inner membrane. The enzyme catalyses fluoride(in) = fluoride(out). Its activity is regulated as follows. Na(+) is not transported, but it plays an essential structural role and its presence is essential for fluoride channel function. In terms of biological role, fluoride-specific ion channel. Important for reducing fluoride concentration in the cell, thus reducing its toxicity. In Nitrobacter hamburgensis (strain DSM 10229 / NCIMB 13809 / X14), this protein is Fluoride-specific ion channel FluC 2.